The chain runs to 533 residues: ASGQLHRPQPQEHTSTSAAAGTWRHTQASESRHRLPHCSAAPSHQDHSAMGFGPELWCPKGHSELLRLQDSELRLLELMKKWMSERAKSDREYAGMLHHMFSQLGSEEPPPALPLQEDRQSVCSTDQERSGVTALETIKNHISGIFSPRFSLPPPVPLIPEVQKPLCQQAWYHGAIPRSEVQELLKCSGDFLVRESQGKQEYVLSVLWDGQPRHFIIQAADNLYRLEGDGFPTIPLLIDHLLQSQQPITRKSGIVLTRAVLKDKWVLNHEDVLLGERIGRGNFGEVFSGRLRADNTPVAVKSCRETLPPELKAKFLQEARILKQYNHPNIVRLIGVCTQKQPIYIVMELVQGGDFLSFLRSKGPHLKMKELIKMMENAAAGMEYLESKHCIHRDLAARNCLVTEKNTLKISDFGMSRQEEDGVYASTGGMKQIPVKWTAPEALNYGRYSSESDVWSFGILLWEAFSLGAVPYANLSNQQTREAIEQGVRLEPPEQCPEDVYRLMQRCWEYDPRRRPSFGAVHQDLIAIRKRHR.

A disordered region spans residues 1–46 (ASGQLHRPQPQEHTSTSAAAGTWRHTQASESRHRLPHCSAAPSHQD). Over residues 11–29 (QEHTSTSAAAGTWRHTQAS) the composition is skewed to polar residues. The region spanning 50–124 (MGFGPELWCP…LQEDRQSVCS (75 aa)) is the F-BAR; degenerate domain. In terms of domain architecture, SH2 spans 171–260 (WYHGAIPRSE…KSGIVLTRAV (90 aa)). The Protein kinase domain occupies 272–525 (VLLGERIGRG…PSFGAVHQDL (254 aa)). ATP-binding positions include 278-286 (IGRGNFGEV) and lysine 301. Aspartate 394 serves as the catalytic Proton acceptor. Tyrosine 424 bears the Phosphotyrosine; by autocatalysis mark.

Belongs to the protein kinase superfamily. Tyr protein kinase family. Fes/fps subfamily.

It carries out the reaction L-tyrosyl-[protein] + ATP = O-phospho-L-tyrosyl-[protein] + ADP + H(+). This is Tyrosine-protein kinase transforming protein Fps (V-FPS) from Gallus gallus (Chicken).